The chain runs to 229 residues: Uracil-DNA glycosylase (229 aa).

Catalysis depends on Asp64, which acts as the Proton acceptor.

The protein belongs to the uracil-DNA glycosylase (UDG) superfamily. UNG family.

The protein resides in the cytoplasm. It carries out the reaction Hydrolyzes single-stranded DNA or mismatched double-stranded DNA and polynucleotides, releasing free uracil.. Excises uracil residues from the DNA which can arise as a result of misincorporation of dUMP residues by DNA polymerase or due to deamination of cytosine. The polypeptide is Uracil-DNA glycosylase (Escherichia coli O81 (strain ED1a)).